We begin with the raw amino-acid sequence, 249 residues long: Ubiquinone/menaquinone biosynthesis C-methyltransferase UbiE (249 aa).

Residues threonine 72, aspartate 93, and 121-122 (NA) contribute to the S-adenosyl-L-methionine site.

It belongs to the class I-like SAM-binding methyltransferase superfamily. MenG/UbiE family.

It catalyses the reaction a 2-demethylmenaquinol + S-adenosyl-L-methionine = a menaquinol + S-adenosyl-L-homocysteine + H(+). The enzyme catalyses a 2-methoxy-6-(all-trans-polyprenyl)benzene-1,4-diol + S-adenosyl-L-methionine = a 5-methoxy-2-methyl-3-(all-trans-polyprenyl)benzene-1,4-diol + S-adenosyl-L-homocysteine + H(+). It participates in quinol/quinone metabolism; menaquinone biosynthesis; menaquinol from 1,4-dihydroxy-2-naphthoate: step 2/2. It functions in the pathway cofactor biosynthesis; ubiquinone biosynthesis. Methyltransferase required for the conversion of demethylmenaquinol (DMKH2) to menaquinol (MKH2) and the conversion of 2-polyprenyl-6-methoxy-1,4-benzoquinol (DDMQH2) to 2-polyprenyl-3-methyl-6-methoxy-1,4-benzoquinol (DMQH2). This chain is Ubiquinone/menaquinone biosynthesis C-methyltransferase UbiE, found in Hahella chejuensis (strain KCTC 2396).